The primary structure comprises 955 residues: Leucine--tRNA ligase (955 aa).

The 'HIGH' region motif lies at 51–61; sequence PYLNGVLHAGH. Residues 647-651 carry the 'KMSKS' region motif; that stretch reads KLSKS. Lys-650 is a binding site for ATP.

It belongs to the class-I aminoacyl-tRNA synthetase family.

Its subcellular location is the cytoplasm. The catalysed reaction is tRNA(Leu) + L-leucine + ATP = L-leucyl-tRNA(Leu) + AMP + diphosphate. The sequence is that of Leucine--tRNA ligase from Methanococcus maripaludis (strain DSM 14266 / JCM 13030 / NBRC 101832 / S2 / LL).